The primary structure comprises 577 residues: Arginine--tRNA ligase (577 aa).

A 'HIGH' region motif is present at residues 122–132; the sequence is PNVAKEMHVGH.

This sequence belongs to the class-I aminoacyl-tRNA synthetase family. Monomer.

The protein resides in the cytoplasm. The enzyme catalyses tRNA(Arg) + L-arginine + ATP = L-arginyl-tRNA(Arg) + AMP + diphosphate. This is Arginine--tRNA ligase from Citrobacter koseri (strain ATCC BAA-895 / CDC 4225-83 / SGSC4696).